The following is a 336-amino-acid chain: Glyceraldehyde-3-phosphate dehydrogenase 1 (336 aa).

Residues 13–14 and aspartate 35 each bind NAD(+); that span reads RI. Position 59 is a phosphoserine (serine 59). Arginine 80 lines the NAD(+) pocket. Serine 125 carries the phosphoserine modification. D-glyceraldehyde 3-phosphate is bound by residues 151-153, threonine 182, 211-212, and arginine 234; these read SCT and TG. The active-site Nucleophile is cysteine 152. NAD(+) is bound at residue asparagine 316.

The protein belongs to the glyceraldehyde-3-phosphate dehydrogenase family. In terms of assembly, homotetramer.

The protein resides in the cytoplasm. The catalysed reaction is D-glyceraldehyde 3-phosphate + phosphate + NAD(+) = (2R)-3-phospho-glyceroyl phosphate + NADH + H(+). It functions in the pathway carbohydrate degradation; glycolysis; pyruvate from D-glyceraldehyde 3-phosphate: step 1/5. The sequence is that of Glyceraldehyde-3-phosphate dehydrogenase 1 (tdh1) from Schizosaccharomyces pombe (strain 972 / ATCC 24843) (Fission yeast).